The chain runs to 353 residues: uncharacterized protein (353 aa).

The disordered stretch occupies residues 69–106 (ISSATPSSTPPATRASSRLQPPKGHQAGGSNSQQQQPS). The span at 70–86 (SSATPSSTPPATRASSR) shows a compositional bias: low complexity. Residues 319 to 353 (GENKEKKMREMSRVYREMTRQMDDTRRDLDRLNQG) adopt a coiled-coil conformation.

This is an uncharacterized protein from Gibberella zeae (strain ATCC MYA-4620 / CBS 123657 / FGSC 9075 / NRRL 31084 / PH-1) (Wheat head blight fungus).